The primary structure comprises 2381 residues: Highly reducing polyketide synthase virA (2381 aa).

One can recognise a Ketosynthase family 3 (KS3) domain in the interval 1-420 (MDALHLACHL…GANGHVILES (420 aa)). Residues Cys171, His306, and His344 each act as for beta-ketoacyl synthase activity in the active site. The malonyl-CoA:ACP transacylase (MAT) domain stretch occupies residues 535-851 (VFTGQGAQYA…PYSPTLVRKE (317 aa)). The active-site For malonyltransferase activity is Ser629. The segment at 920-1064 (HELLGTRATA…GSIRVMESTL (145 aa)) is N-terminal hotdog fold. A dehydratase (DH) domain region spans residues 920 to 1232 (HELLGTRATA…HLRMNEYTGK (313 aa)). One can recognise a PKS/mFAS DH domain in the interval 920–1235 (HELLGTRATA…MNEYTGKAPV (316 aa)). The active-site Proton acceptor; for dehydratase activity is His952. Residues 1078-1235 (HEVWGMSRWY…MNEYTGKAPV (158 aa)) are C-terminal hotdog fold. The Proton donor; for dehydratase activity role is filled by Asp1144. The segment at 1639–1956 (GMTDTIHFQQ…NKDRVGKVVV (318 aa)) is enoyl reductase (ER) domain. Positions 1981-2159 (TYLLVGCLGG…AVSVGLGMIS (179 aa)) are ketoreductase (KR) domain. The region spanning 2297 to 2375 (TMLDAILRLT…TLAEFIEEKL (79 aa)) is the Carrier domain. An O-(pantetheine 4'-phosphoryl)serine modification is found at Ser2334.

It participates in secondary metabolite biosynthesis. Functionally, highly reducing polyketide synthase; part of the gene cluster that mediates the biosynthesis of virensols and trichoxide, fungal natural products that contain or are derived from a salicylaldehyde core. The pathway begins with the synthesis of the reduced chain in virensol C by the highly reducing polyketide synthase virA via condensation of one acetate and 8 malonate units. VirA has interesting programming rules since the first 2 ketides are fully reduced, the 3 following ketides undergo beta-dehydration, and the last 3 ketides are only reduced to beta-hydroxys to yield the trihydroxy portion. The production of aldehyde virensol C by virA alone is surprising, since virA does not contain a reductase (R) domain that is typically associated with reductive product release in HRPKS. The cupin-domain enzyme virC is involved in enhancing virA product turnover. The short-chain dehydrogenase virB then oxidizes the C-7 alcohol of virensol C to a ketone, yielding virensol D. Virensol D is further transformed to salicylaldehyde 5-deoxyaurocitrin by the short-chain dehydrogenase virD. VirD catalyzes the dehydrogenation of C-3 to form the beta-ketone aldehyde, which is followed by the generation of the nucleophilic C-2 that is required for the intramolecular aldol condensation between C-2 and C-7, itself followed by dehydration and aromatization which leads to salicylaldehyde 5-deoxyaurocitrin. While the dehydrogenation of virensol D is definitely catalyzed by virD, the aldol condensation and dehydration may be uncatalyzed or assisted by virD. The short chain dehydrogenase virG then converts salicylaldehyde 5-deoxyaurocitrin into virensol B which is further hydroxylated by the cytochrome P450 monooxygenase virE to yield the hydroquinone virensol A. VirI then may oxidize virensol A to form the quinone, while virH performs the epoxidation. Finally, the two remaining short-chain dehydrogenases, virK and virL, are probably responsible for reducing the ketones to the corresponding alcohols to furnish the epoxycyclohexanol structure in trichoxide. This chain is Highly reducing polyketide synthase virA, found in Hypocrea virens (strain Gv29-8 / FGSC 10586) (Gliocladium virens).